A 344-amino-acid chain; its full sequence is N-acetyl-gamma-glutamyl-phosphate reductase (344 aa).

Residue C150 is part of the active site.

It belongs to the NAGSA dehydrogenase family. Type 1 subfamily.

It is found in the cytoplasm. The enzyme catalyses N-acetyl-L-glutamate 5-semialdehyde + phosphate + NADP(+) = N-acetyl-L-glutamyl 5-phosphate + NADPH + H(+). Its pathway is amino-acid biosynthesis; L-arginine biosynthesis; N(2)-acetyl-L-ornithine from L-glutamate: step 3/4. Functionally, catalyzes the NADPH-dependent reduction of N-acetyl-5-glutamyl phosphate to yield N-acetyl-L-glutamate 5-semialdehyde. The protein is N-acetyl-gamma-glutamyl-phosphate reductase of Pseudomonas aeruginosa (strain UCBPP-PA14).